A 353-amino-acid polypeptide reads, in one-letter code: Glutamine synthetase cytosolic isozyme 1-5 (353 aa).

Threonine 2 is subject to N-acetylthreonine. Serine 3 carries the phosphoserine modification. Residues 19-99 form the GS beta-grasp domain; it reads IIAEYIWIGG…VMCDAYRPAG (81 aa). A GS catalytic domain is found at 106 to 353; sequence NRHKAVKIFD…TSMIAETTIL (248 aa).

This sequence belongs to the glutamine synthetase family. In terms of assembly, homooctamer. Not expressed in roots.

The protein resides in the cytoplasm. The enzyme catalyses L-glutamate + NH4(+) + ATP = L-glutamine + ADP + phosphate + H(+). This is Glutamine synthetase cytosolic isozyme 1-5 (GLN1-5) from Arabidopsis thaliana (Mouse-ear cress).